The primary structure comprises 88 residues: uncharacterized protein (88 aa).

3 helical membrane-spanning segments follow: residues 3–23, 33–53, and 61–81; these read VFILFYLWIVPIVIGILCSVA, VAPGIAMIVLSIISLITAFTA, and FIGGMFLFGTFLVGSAFPFFF.

It is found in the cell membrane. This is an uncharacterized protein from Bacillus subtilis (strain 168).